The sequence spans 80 residues: NAD(P)H-quinone oxidoreductase subunit O (80 aa).

This sequence belongs to the complex I NdhO subunit family. As to quaternary structure, NDH-1 can be composed of about 15 different subunits; different subcomplexes with different compositions have been identified which probably have different functions.

It localises to the cellular thylakoid membrane. The enzyme catalyses a plastoquinone + NADH + (n+1) H(+)(in) = a plastoquinol + NAD(+) + n H(+)(out). It carries out the reaction a plastoquinone + NADPH + (n+1) H(+)(in) = a plastoquinol + NADP(+) + n H(+)(out). In terms of biological role, NDH-1 shuttles electrons from an unknown electron donor, via FMN and iron-sulfur (Fe-S) centers, to quinones in the respiratory and/or the photosynthetic chain. The immediate electron acceptor for the enzyme in this species is believed to be plastoquinone. Couples the redox reaction to proton translocation, and thus conserves the redox energy in a proton gradient. Cyanobacterial NDH-1 also plays a role in inorganic carbon-concentration. The protein is NAD(P)H-quinone oxidoreductase subunit O of Prochlorococcus marinus subsp. pastoris (strain CCMP1986 / NIES-2087 / MED4).